The following is a 251-amino-acid chain: 4-hydroxy-tetrahydrodipicolinate reductase (251 aa).

Residues 8–13, 76–78, and 106–109 contribute to the NAD(+) site; these read GAKGRM, GTT, and APNF. His136 functions as the Proton donor/acceptor in the catalytic mechanism. Residue His137 coordinates (S)-2,3,4,5-tetrahydrodipicolinate. Residue Lys140 is the Proton donor of the active site. 146-147 lines the (S)-2,3,4,5-tetrahydrodipicolinate pocket; sequence GT.

The protein belongs to the DapB family.

Its subcellular location is the cytoplasm. It catalyses the reaction (S)-2,3,4,5-tetrahydrodipicolinate + NAD(+) + H2O = (2S,4S)-4-hydroxy-2,3,4,5-tetrahydrodipicolinate + NADH + H(+). The enzyme catalyses (S)-2,3,4,5-tetrahydrodipicolinate + NADP(+) + H2O = (2S,4S)-4-hydroxy-2,3,4,5-tetrahydrodipicolinate + NADPH + H(+). Its pathway is amino-acid biosynthesis; L-lysine biosynthesis via DAP pathway; (S)-tetrahydrodipicolinate from L-aspartate: step 4/4. In terms of biological role, catalyzes the conversion of 4-hydroxy-tetrahydrodipicolinate (HTPA) to tetrahydrodipicolinate. This chain is 4-hydroxy-tetrahydrodipicolinate reductase, found in Bifidobacterium longum subsp. infantis (strain ATCC 15697 / DSM 20088 / JCM 1222 / NCTC 11817 / S12).